The primary structure comprises 389 residues: Spore coat polysaccharide biosynthesis protein SpsC (389 aa).

The residue at position 187 (Lys187) is an N6-(pyridoxal phosphate)lysine.

The protein belongs to the DegT/DnrJ/EryC1 family. Pyridoxal 5'-phosphate serves as cofactor.

It functions in the pathway spore coat biogenesis; spore coat polysaccharide biosynthesis. The protein is Spore coat polysaccharide biosynthesis protein SpsC (spsC) of Bacillus subtilis (strain 168).